Reading from the N-terminus, the 167-residue chain is Phospholipase A and acyltransferase 1 (167 aa).

Topologically, residues 1–138 are cytoplasmic; the sequence is MAVNDCFSLT…GEGVSEQANR (138 aa). Residues 20-135 enclose the LRAT domain; it reads LIEVFRPCYQ…LRYGEGVSEQ (116 aa). His30 is an active-site residue. Catalysis depends on Cys119, which acts as the Acyl-thioester intermediate. Residues 139-159 traverse the membrane as a helical segment; the sequence is AIGTIGLVAAGIDIFTFLGLF. Topologically, residues 160–167 are lumenal; sequence PKRQGAKS.

Belongs to the H-rev107 family.

Its subcellular location is the membrane. The protein localises to the cytoplasm. It is found in the nucleus. It carries out the reaction a 1,2-diacyl-sn-glycero-3-phosphocholine + H2O = a 1-acyl-sn-glycero-3-phosphocholine + a fatty acid + H(+). It catalyses the reaction a 1,2-diacyl-sn-glycero-3-phosphocholine + H2O = a 2-acyl-sn-glycero-3-phosphocholine + a fatty acid + H(+). The enzyme catalyses 1,2-dihexadecanoyl-sn-glycero-3-phosphocholine + H2O = 2-hexadecanoyl-sn-glycero-3-phosphocholine + hexadecanoate + H(+). The catalysed reaction is 1,2-dihexadecanoyl-sn-glycero-3-phosphocholine + H2O = 1-hexadecanoyl-sn-glycero-3-phosphocholine + hexadecanoate + H(+). It carries out the reaction 1-hexadecanoyl-2-(5Z,8Z,11Z,14Z-eicosatetraenoyl)-sn-glycero-3-phosphoethanolamine + H2O = 2-(5Z,8Z,11Z,14Z)-eicosatetraenoyl-sn-glycero-3-phosphoethanolamine + hexadecanoate + H(+). It catalyses the reaction 1-hexadecanoyl-2-(5Z,8Z,11Z,14Z-eicosatetraenoyl)-sn-glycero-3-phosphoethanolamine + H2O = 1-hexadecanoyl-sn-glycero-3-phosphoethanolamine + (5Z,8Z,11Z,14Z)-eicosatetraenoate + H(+). The enzyme catalyses 1,2-di-(9Z-octadecenoyl)-sn-glycero-3-phosphoethanolamine + 1,2-dihexadecanoyl-sn-glycero-3-phosphocholine = hexadecanoyl-sn-glycero-3-phosphocholine + N-hexadecanoyl-1,2-di-(9Z-octadecenoyl)-sn-glycero-3-phosphoethanolamine + H(+). The catalysed reaction is 1,2-dihexadecanoyl-sn-glycero-3-phosphocholine + a 2-acyl-sn-glycero-3-phosphocholine = a 1-hexadecanoyl-2-acyl-sn-glycero-3-phosphocholine + 2-hexadecanoyl-sn-glycero-3-phosphocholine. In terms of biological role, exhibits both phospholipase A1/2 and acyltransferase activities. Shows phospholipase A1 (PLA1) and A2 (PLA2) activity, catalyzing the calcium-independent release of fatty acids from the sn-1 or sn-2 position of glycerophospholipids. Shows O-acyltransferase activity, catalyzing the transfer of a fatty acyl group from glycerophospholipid to the hydroxyl group of lysophospholipid. The chain is Phospholipase A and acyltransferase 1 from Rattus norvegicus (Rat).